Reading from the N-terminus, the 170-residue chain is Photosystem II extrinsic protein V (170 aa).

An N-terminal signal peptide occupies residues 1 to 33 (MASLFASLGRSLIKLLIVLPVIIGLSISSPAMA). Residues Cys-70, Cys-73, His-74, and His-125 each coordinate heme c.

The protein belongs to the cytochrome c family. PsbV subfamily. In terms of assembly, PSII is composed of 1 copy each of membrane proteins PsbA, PsbB, PsbC, PsbD, PsbE, PsbF, PsbH, PsbI, PsbJ, PsbK, PsbL, PsbM, PsbT, PsbX, PsbY, Psb30/Ycf12, peripheral proteins PsbO, CyanoQ (PsbQ), PsbU, PsbV and a large number of cofactors. It forms dimeric complexes. Heme c is required as a cofactor.

It is found in the cellular thylakoid membrane. In terms of biological role, one of the extrinsic, lumenal subunits of photosystem II (PSII). PSII is a light-driven water plastoquinone oxidoreductase, using light energy to abstract electrons from H(2)O, generating a proton gradient subsequently used for ATP formation. The extrinsic proteins stabilize the structure of photosystem II oxygen-evolving complex (OEC), the ion environment of oxygen evolution and protect the OEC against heat-induced inactivation. Low-potential cytochrome c that plays a role in the OEC of PSII. This Prochlorococcus marinus (strain MIT 9303) protein is Photosystem II extrinsic protein V.